A 241-amino-acid chain; its full sequence is Lipopolysaccharide export system ATP-binding protein LptB (241 aa).

An ABC transporter domain is found at 5 to 237; it reads LQAQSLFKSY…PMVRQVYLGD (233 aa). ATP is bound at residue 37–44; sequence GPNGAGKT.

It belongs to the ABC transporter superfamily. Outer membrane lipopolysaccharide export (TC 1.B.42) family. In terms of assembly, component of the lipopolysaccharide transport and assembly complex. The LptBFG transporter is composed of two ATP-binding proteins (LptB) and two transmembrane proteins (LptF and LptG).

Its subcellular location is the cytoplasm. It localises to the cell inner membrane. Part of the ABC transporter complex LptBFG involved in the translocation of lipopolysaccharide (LPS) from the inner membrane to the outer membrane. Probably responsible for energy coupling to the transport system. The sequence is that of Lipopolysaccharide export system ATP-binding protein LptB (lptB) from Acidithiobacillus ferridurans.